The primary structure comprises 147 residues: Small ribosomal subunit protein eS19 (147 aa).

Belongs to the eukaryotic ribosomal protein eS19 family. Component of the small ribosomal subunit.

It localises to the cytoplasm. The protein resides in the nucleus. Component of the small ribosomal subunit. The ribosome is a large ribonucleoprotein complex responsible for the synthesis of proteins in the cell. Required for pre-rRNA processing and maturation of 40S ribosomal subunits. This is Small ribosomal subunit protein eS19 (rps19) from Ictalurus punctatus (Channel catfish).